A 642-amino-acid chain; its full sequence is Extracellular metalloproteinase 4 (642 aa).

The signal sequence occupies residues 1–18 (MHGLLLAGLLALPLNVLA). The propeptide occupies 19 to 253 (HPTESHSSGI…VHSVVDYVSA (235 aa)). Residues 49–60 (SDSLTGQDGQSF) are compositionally biased toward polar residues. Residues 49 to 72 (SDSLTGQDGQSFTASSADADTSSG) form a disordered region. The segment covering 61–71 (TASSADADTSS) has biased composition (low complexity). N-linked (GlcNAc...) asparagine glycosylation is present at Asn-419. His-436 is a binding site for Zn(2+). Residue Glu-437 is part of the active site. Residue His-440 coordinates Zn(2+). 2 N-linked (GlcNAc...) asparagine glycosylation sites follow: Asn-509 and Asn-602.

The protein belongs to the peptidase M36 family. Requires Zn(2+) as cofactor.

It localises to the secreted. Secreted metalloproteinase that allows assimilation of proteinaceous substrates and probably acts as a virulence factor. The protein is Extracellular metalloproteinase 4 (MEP4) of Arthroderma gypseum (strain ATCC MYA-4604 / CBS 118893) (Microsporum gypseum).